Consider the following 155-residue polypeptide: Small ribosomal subunit protein uS8m (155 aa).

The protein belongs to the universal ribosomal protein uS8 family. In terms of assembly, component of the mitochondrial small ribosomal subunit (mt-SSU). Mature yeast 74S mitochondrial ribosomes consist of a small (37S) and a large (54S) subunit. The 37S small subunit contains a 15S ribosomal RNA (15S mt-rRNA) and 34 different proteins. The 54S large subunit contains a 21S rRNA (21S mt-rRNA) and 46 different proteins.

It localises to the mitochondrion. Component of the mitochondrial ribosome (mitoribosome), a dedicated translation machinery responsible for the synthesis of mitochondrial genome-encoded proteins, including at least some of the essential transmembrane subunits of the mitochondrial respiratory chain. The mitoribosomes are attached to the mitochondrial inner membrane and translation products are cotranslationally integrated into the membrane. The protein is Small ribosomal subunit protein uS8m (MRPS8) of Saccharomyces cerevisiae (strain ATCC 204508 / S288c) (Baker's yeast).